Here is a 352-residue protein sequence, read N- to C-terminus: Diacylglycerol acyltransferase/mycolyltransferase Ag85C (352 aa).

An N-terminal signal peptide occupies residues 1 to 37; the sequence is MSFIEKVRKLRGAAATMPRRLAIAAVGASLLSGVAVA. Position 86–87 (86–87) interacts with substrate; that stretch reads LR. The fibronectin-binding stretch occupies residues 102–112; sequence FEEFYQSGLSV. Substrate contacts are provided by Ser170 and Asn198. The Nucleophile role is filled by Ser170. The active site involves Glu274. Residues 276–279 and 306–308 each bind substrate; these read LTLR and HSW. The active site involves His306. The interval 332-352 is disordered; the sequence is TAAPAQPAQPAQPAQPAQPAT. Residues 333–352 show a composition bias toward low complexity; that stretch reads AAPAQPAQPAQPAQPAQPAT.

This sequence belongs to the mycobacterial A85 antigen family. Homodimer.

It localises to the secreted. The catalysed reaction is an acyl-CoA + a 1,2-diacyl-sn-glycerol = a triacyl-sn-glycerol + CoA. It carries out the reaction 2 alpha,alpha'-trehalose 6-mycolate = alpha,alpha'-trehalose 6,6'-bismycolate + alpha,alpha-trehalose. The antigen 85 proteins (FbpA, FbpB, FbpC) are responsible for the high affinity of mycobacteria to fibronectin, a large adhesive glycoprotein, which facilitates the attachment of M.tuberculosis to murine alveolar macrophages (AMs). They also help to maintain the integrity of the cell wall by catalyzing the transfer of mycolic acids to cell wall arabinogalactan and through the synthesis of alpha,alpha-trehalose dimycolate (TDM, cord factor). They catalyze the transfer of a mycoloyl residue from one molecule of alpha,alpha-trehalose monomycolate (TMM) to another TMM, leading to the formation of TDM. The chain is Diacylglycerol acyltransferase/mycolyltransferase Ag85C (fbpC) from Mycobacterium avium.